We begin with the raw amino-acid sequence, 229 residues long: tRNA pseudouridine synthase B (229 aa).

Aspartate 52 serves as the catalytic Nucleophile.

This sequence belongs to the pseudouridine synthase TruB family. Type 1 subfamily.

The enzyme catalyses uridine(55) in tRNA = pseudouridine(55) in tRNA. Its function is as follows. Responsible for synthesis of pseudouridine from uracil-55 in the psi GC loop of transfer RNAs. This Flavobacterium johnsoniae (strain ATCC 17061 / DSM 2064 / JCM 8514 / BCRC 14874 / CCUG 350202 / NBRC 14942 / NCIMB 11054 / UW101) (Cytophaga johnsonae) protein is tRNA pseudouridine synthase B.